An 88-amino-acid polypeptide reads, in one-letter code: Molybdopterin synthase sulfur carrier subunit (88 aa).

At Gly-88 the chain carries 1-thioglycine; alternate. Position 88 is a glycyl adenylate; alternate (Gly-88).

This sequence belongs to the MoaD family. MOCS2A subfamily. Heterotetramer; composed of 2 small (MOCS2A) and 2 large (MOCS2B) subunits. C-terminal thiocarboxylation occurs in 2 steps, it is first acyl-adenylated (-COAMP) via the hesA/moeB/thiF part of MOCS3, then thiocarboxylated (-COSH) via the rhodanese domain of MOCS3.

The protein localises to the cytoplasm. The protein resides in the cytosol. The protein operates within cofactor biosynthesis; molybdopterin biosynthesis. Its function is as follows. Acts as a sulfur carrier required for molybdopterin biosynthesis. Component of the molybdopterin synthase complex that catalyzes the conversion of precursor Z into molybdopterin by mediating the incorporation of 2 sulfur atoms into precursor Z to generate a dithiolene group. In the complex, serves as sulfur donor by being thiocarboxylated (-COSH) at its C-terminus by MOCS3. After interaction with MOCS2B, the sulfur is then transferred to precursor Z to form molybdopterin. The protein is Molybdopterin synthase sulfur carrier subunit of Mus musculus (Mouse).